The sequence spans 198 residues: MIEFVYPHTHLVAGVDEVGRGPLVGAVVTAAVILDPARPIVGLNDSKKLSEKRRLSLYDEIKEKALSWSLGRAEAHEIDELNILHATMLAMQRAVAGLHIAPEYVLIDGNRCPELPVPSMAVVKGDSRVAEISAASILAKVTRDAEMAALDIVFPQYGFAQHKGYPTAFHLEKLAQYGATAHHRRSFAPVKRALGLVS.

The region spanning 10–198 (HLVAGVDEVG…PVKRALGLVS (189 aa)) is the RNase H type-2 domain. A divalent metal cation-binding residues include D16, E17, and D108.

The protein belongs to the RNase HII family. Mn(2+) is required as a cofactor. The cofactor is Mg(2+).

Its subcellular location is the cytoplasm. It carries out the reaction Endonucleolytic cleavage to 5'-phosphomonoester.. Its function is as follows. Endonuclease that specifically degrades the RNA of RNA-DNA hybrids. The polypeptide is Ribonuclease HII (Salmonella paratyphi A (strain AKU_12601)).